We begin with the raw amino-acid sequence, 141 residues long: Acetyltransferase YE1169 (141 aa).

One can recognise an N-acetyltransferase domain in the interval 1-141 (MEIRVFQQSD…GKRLIVDQEY (141 aa)).

Belongs to the acetyltransferase family. YpeA subfamily.

The protein is Acetyltransferase YE1169 of Yersinia enterocolitica serotype O:8 / biotype 1B (strain NCTC 13174 / 8081).